Reading from the N-terminus, the 308-residue chain is Porphobilinogen deaminase (308 aa).

Cys241 is modified (S-(dipyrrolylmethanemethyl)cysteine).

Belongs to the HMBS family. In terms of assembly, monomer. Dipyrromethane serves as cofactor.

The catalysed reaction is 4 porphobilinogen + H2O = hydroxymethylbilane + 4 NH4(+). The protein operates within porphyrin-containing compound metabolism; protoporphyrin-IX biosynthesis; coproporphyrinogen-III from 5-aminolevulinate: step 2/4. Its function is as follows. Tetrapolymerization of the monopyrrole PBG into the hydroxymethylbilane pre-uroporphyrinogen in several discrete steps. The sequence is that of Porphobilinogen deaminase from Staphylococcus aureus (strain MRSA252).